The following is a 366-amino-acid chain: Arfaptin-1 (366 aa).

Residues 1-78 (MAEESPKNSA…SSAPPLPCVL (78 aa)) are disordered. An N-acetylalanine modification is found at A2. A Phosphoserine modification is found at S5. Residues 22 to 35 (GDAHEHGYNRDLKH) show a composition bias toward basic and acidic residues. Phosphoserine is present on residues S36 and S39. Residues 44–53 (SETQITSHGF) are compositionally biased toward polar residues. Phosphoserine occurs at positions 69, 79, and 125. One can recognise an AH domain in the interval 146–346 (TVDLELEAQI…NQKQLEQTLK (201 aa)). Position 354 is a phosphothreonine (T354).

As to quaternary structure, forms homodimers or heterodimers with ARFIP2. Interacts with non-myristoylated GTP-bound ARF3, but not to GDP-bound ARF3. Interacts with ARF1. Binds with lower affinity to ARF5 and with very little affinity to ARF6. Interacts with ARL1. Interacts with ATG9A.

The protein resides in the golgi apparatus. Its subcellular location is the trans-Golgi network membrane. In terms of biological role, plays a role in controlling biogenesis of secretory granules at the trans-Golgi network. Mechanistically, binds ARF-GTP at the neck of a growing secretory granule precursor and forms a protective scaffold. Once the granule precursor has been completely loaded, active PRKD1 phosphorylates ARFIP1 and releases it from ARFs. In turn, ARFs induce fission. Through this mechanism, ensures proper secretory granule formation at the Golgi of pancreatic beta cells. This Rattus norvegicus (Rat) protein is Arfaptin-1.